We begin with the raw amino-acid sequence, 450 residues long: MYTFEVFDSRTRSIVKLEDCLLRLYVCGITPYKSTHLGHAFTYVGFDTLFRLALDSGRDVLYIQNISDIDEPLFQYAEKVGIHYKDLARTQTKRFFEDMHTLECLPPGYVIPVSKVLDGIKTGIEGLISRNMAYKLPNGDVYFDSTLTDPGKMFCFDRKTAMSLMLETDTGKNPFDPLLWRGRGAEPQWEASFGAGRPAWHISCAVLSNLQTQYENVLHIYGGGRDLAFPHHEFTNVLSKLIRAPKDNKQQDTVQDVFMHTGLVSYMGDKMSKSKGNLVFISQLREQCEKIGLHHSVIRLALLQRHYREDWEWQDECLDRAASRFRLWKSALQEYIGAKGIRSTADQNKGTQGAWERIHGGVFDSNFDHRQPIHPKHSPQMRDYSEHGSAGQNGTDLDLSLYQAIRFHLCNDLDTPKALDAVDSYARKGTITIPEARAVEKLLGIPLTRV.

Residues isoleucine 29 to histidine 39 carry the 'HIGH' region motif. A 'KMSKS' region motif is present at residues lysine 270–serine 274. ATP is bound at residue lysine 273. Positions proline 372–glutamine 392 are disordered.

It belongs to the class-I aminoacyl-tRNA synthetase family. In terms of assembly, monomer.

It localises to the cytoplasm. It carries out the reaction tRNA(Cys) + L-cysteine + ATP = L-cysteinyl-tRNA(Cys) + AMP + diphosphate. The chain is Putative cysteine--tRNA ligase 2 (cysS2) from Tropheryma whipplei (strain TW08/27) (Whipple's bacillus).